The sequence spans 107 residues: 4-carboxymethyl-4-methylbutenolide mutase (107 aa).

Residue H26 is the Proton donor/acceptor of the active site. 3-methylmuconolactone-binding residues include H26 and Y39. 2 residues coordinate 4-methylmuconolactone: H26 and Y39.

This sequence belongs to the MmlI family. As to quaternary structure, homodimer.

It catalyses the reaction 4-methylmuconolactone = 3-methylmuconolactone. Inhibited by p-chloromercuribenzoate. Isomerase involved in the degradation of 4-methylsalicylate and 5-methylsalicylate. Catalyzes the isomerization of the dead-end metabolite 4-methylmuconolactone (4-ML) to 3-methylmuconolactone (3-ML), which can then be further degraded through a modified 3-oxoadipate pathway. Can also use 1-methylbislactone but not 3-methyl-cis,cis-muconate. This chain is 4-carboxymethyl-4-methylbutenolide mutase, found in Pseudomonas reinekei.